We begin with the raw amino-acid sequence, 308 residues long: Very-long-chain enoyl-CoA reductase (308 aa).

Over 1–86 (MKHYEVEIRD…YFRDLGAQIS (86 aa)) the chain is Cytoplasmic. Lys22 bears the N6-acetyllysine mark. A Phosphoserine modification is found at Ser58. Lys60 carries the N6-acetyllysine modification. Residues 87 to 106 (WVTVFLTEYAGPLFIYLLFY) traverse the membrane as a helical segment. Residues 107-124 (FRVPFIYGRKYDFTSSRH) are Lumenal-facing. Residues 125-147 (TVVHLACMCHSFHYIKRLLETLF) traverse the membrane as a helical segment. The Cytoplasmic portion of the chain corresponds to 148–158 (VHRFSHGTMPL). A helical transmembrane segment spans residues 159–180 (RNIFKNCTYYWGFAAWMAYYIN). Topologically, residues 181 to 189 (HPLYTPPTY) are lumenal. A helical transmembrane segment spans residues 190–216 (GVQQVKLALAIFVICQLGNFSIHMALR). Over 217-245 (DLRPAGSKTRKIPYPTKNPFTWLFLLVSC) the chain is Cytoplasmic. The helical transmembrane segment at 246–262 (PNYTYEVGSWIGFAIMT) threads the bilayer. Topologically, residues 263-264 (QC) are lumenal. A helical membrane pass occupies residues 265–292 (VPVALFSLVGFTQMTIWAKGKHRSYLKE). The Cytoplasmic segment spans residues 293-308 (FRDYPPLRMPIIPFLL).

This sequence belongs to the steroid 5-alpha reductase family. Interacts with ELOVL1 and LASS2. Glycosylated. Expressed at high levels in brain and is also found at lower levels in several other tissues.

The protein localises to the endoplasmic reticulum membrane. The catalysed reaction is a very-long-chain 2,3-saturated fatty acyl-CoA + NADP(+) = a very-long-chain (2E)-enoyl-CoA + NADPH + H(+). The enzyme catalyses octadecanoyl-CoA + NADP(+) = (2E)-octadecenoyl-CoA + NADPH + H(+). It carries out the reaction (2E,7Z,10Z,13Z,16Z)-docosapentaenoyl-CoA + NADPH + H(+) = (7Z,10Z,13Z,16Z)-docosatetraenoyl-CoA + NADP(+). It catalyses the reaction (2E,7Z,10Z,13Z,16Z,19Z)-docosahexaenoyl-CoA + NADPH + H(+) = (7Z,10Z,13Z,16Z,19Z)-docosapentaenoyl-CoA + NADP(+). The catalysed reaction is (2E,8Z,11Z,14Z)-eicosatetraenoyl-CoA + NADPH + H(+) = (8Z,11Z,14Z)-eicosatrienoyl-CoA + NADP(+). The enzyme catalyses (2E)-hexadecenoyl-CoA + NADPH + H(+) = hexadecanoyl-CoA + NADP(+). The protein operates within lipid metabolism; fatty acid biosynthesis. It functions in the pathway lipid metabolism; sphingolipid metabolism. Functionally, involved in both the production of very long-chain fatty acids for sphingolipid synthesis and the degradation of the sphingosine moiety in sphingolipids through the sphingosine 1-phosphate metabolic pathway. Catalyzes the last of the four reactions of the long-chain fatty acids elongation cycle. This endoplasmic reticulum-bound enzymatic process, allows the addition of 2 carbons to the chain of long- and very long-chain fatty acids/VLCFAs per cycle. This enzyme reduces the trans-2,3-enoyl-CoA fatty acid intermediate to an acyl-CoA that can be further elongated by entering a new cycle of elongation. Thereby, it participates in the production of VLCFAs of different chain lengths that are involved in multiple biological processes as precursors of membrane lipids and lipid mediators. Catalyzes the saturation step of the sphingosine 1-phosphate metabolic pathway, the conversion of trans-2-hexadecenoyl-CoA to palmitoyl-CoA. The protein is Very-long-chain enoyl-CoA reductase (Tecr) of Rattus norvegicus (Rat).